Here is a 509-residue protein sequence, read N- to C-terminus: Apurinic-apyrimidinic endonuclease 1 (509 aa).

Residues 1-24 (MPRHCCCFVFHFLLYMLLINIVKN) form the signal peptide. Positions 144-188 (EEKDEECDEKTKQDNNKENIKNETIVQKKKIDKNNKTKEKIKTKS) are disordered. Basic and acidic residues-rich tracts occupy residues 152-164 (EKTK…ENIK) and 175-188 (DKNN…KTKS). His291, His331, Glu367, Asp401, His404, His438, Asp451, His453, and Glu483 together coordinate Zn(2+). His404 contributes to the Mn(2+) binding site. 2 residues coordinate Mn(2+): Asp451 and His453.

Belongs to the AP endonuclease 2 family. The cofactor is Zn(2+). Requires Mn(2+) as cofactor. May be proteolytically cleaved.

It is found in the mitochondrion. Its function is as follows. Plays a role in mitochondrial DNA base excision repair (BER) pathway induced by oxidative stress. Has apurinic/apyrimidinic (AP) endonuclease activity towards double-stranded DNA (dsDNA) with a preference for C as opposite base. Has 3'-phosphatase activity; removes 3'-phosphate from blunt-end, recessed, and gapped DNA templates and thus, removes 3'-blocks for DNA polymerase activity during BER. Lacks 3'-5' exonuclease activity and does not cleave damaged bases by nucleotide incision repair (NIR). This Plasmodium berghei (strain Anka) protein is Apurinic-apyrimidinic endonuclease 1.